A 199-amino-acid chain; its full sequence is MIARLTGMLAHKSPDAIIIDVNGVGYRVQIPFSTYYELPDEGKTVSLSIYTHVKEDAISLFGFRTVAEKEFFQVLISVSGIGPKMARDILSNIQPDELAGAILQGNLVRLSSIPGIGKKTAERLVLELKEKVRKMDVAPSTKEAAPSEAPPEVADDVASALVNLGYKEAVVRKVLAEMAIESGASTEAVLRQALKILMK.

The segment at 1-64 (MIARLTGMLA…EDAISLFGFR (64 aa)) is domain I. A domain II region spans residues 65–143 (TVAEKEFFQV…KMDVAPSTKE (79 aa)). The interval 144–154 (AAPSEAPPEVA) is flexible linker. The tract at residues 154-199 (ADDVASALVNLGYKEAVVRKVLAEMAIESGASTEAVLRQALKILMK) is domain III.

It belongs to the RuvA family. As to quaternary structure, homotetramer. Forms an RuvA(8)-RuvB(12)-Holliday junction (HJ) complex. HJ DNA is sandwiched between 2 RuvA tetramers; dsDNA enters through RuvA and exits via RuvB. An RuvB hexamer assembles on each DNA strand where it exits the tetramer. Each RuvB hexamer is contacted by two RuvA subunits (via domain III) on 2 adjacent RuvB subunits; this complex drives branch migration. In the full resolvosome a probable DNA-RuvA(4)-RuvB(12)-RuvC(2) complex forms which resolves the HJ.

The protein localises to the cytoplasm. In terms of biological role, the RuvA-RuvB-RuvC complex processes Holliday junction (HJ) DNA during genetic recombination and DNA repair, while the RuvA-RuvB complex plays an important role in the rescue of blocked DNA replication forks via replication fork reversal (RFR). RuvA specifically binds to HJ cruciform DNA, conferring on it an open structure. The RuvB hexamer acts as an ATP-dependent pump, pulling dsDNA into and through the RuvAB complex. HJ branch migration allows RuvC to scan DNA until it finds its consensus sequence, where it cleaves and resolves the cruciform DNA. In Geobacter metallireducens (strain ATCC 53774 / DSM 7210 / GS-15), this protein is Holliday junction branch migration complex subunit RuvA.